Reading from the N-terminus, the 263-residue chain is Fructose-bisphosphate aldolase class 1 (263 aa).

Substrate-binding positions include 24 to 25 (DH), H29, D33, and W144. Y146 serves as the catalytic Proton donor. Substrate is bound by residues R148, 177–179 (KIK), 202–204 (SGG), and 231–232 (GR). The Schiff-base intermediate with dihydroxyacetone-P role is filled by K177.

This sequence belongs to the DeoC/FbaB aldolase family. Homodecamer (dimer of pentamers).

It is found in the cytoplasm. The enzyme catalyses beta-D-fructose 1,6-bisphosphate = D-glyceraldehyde 3-phosphate + dihydroxyacetone phosphate. Its activity is regulated as follows. Activated by citrate. Catalyzes the reversible cleavage of fructose 1,6-bisphosphate (FBP) to glyceraldehyde 3-phosphate (GAP) and dihydroxyacetone phosphate (DHAP). The protein is Fructose-bisphosphate aldolase class 1 (fba) of Thermoproteus tenax (strain ATCC 35583 / DSM 2078 / JCM 9277 / NBRC 100435 / Kra 1).